The sequence spans 200 residues: Superoxide dismutase [Mn] (200 aa).

H27, H77, D160, and H164 together coordinate Mn(2+).

This sequence belongs to the iron/manganese superoxide dismutase family. As to quaternary structure, homodimer. The cofactor is Mn(2+).

It catalyses the reaction 2 superoxide + 2 H(+) = H2O2 + O2. Its function is as follows. Destroys superoxide anion radicals which are normally produced within the cells and which are toxic to biological systems. The sequence is that of Superoxide dismutase [Mn] (sodB) from Rhizobium meliloti (strain 1021) (Ensifer meliloti).